The following is a 362-amino-acid chain: Biotin synthase (362 aa).

In terms of domain architecture, Radical SAM core spans 70 to 305 (CCGNVVDLCS…QQIIRYAGGR (236 aa)). Residues Cys88, Cys92, and Cys95 each coordinate [4Fe-4S] cluster. The [2Fe-2S] cluster site is built by Cys133, Cys170, Cys230, and Arg300.

This sequence belongs to the radical SAM superfamily. Biotin synthase family. As to quaternary structure, homodimer. [4Fe-4S] cluster is required as a cofactor. It depends on [2Fe-2S] cluster as a cofactor.

It catalyses the reaction (4R,5S)-dethiobiotin + (sulfur carrier)-SH + 2 reduced [2Fe-2S]-[ferredoxin] + 2 S-adenosyl-L-methionine = (sulfur carrier)-H + biotin + 2 5'-deoxyadenosine + 2 L-methionine + 2 oxidized [2Fe-2S]-[ferredoxin]. The protein operates within cofactor biosynthesis; biotin biosynthesis; biotin from 7,8-diaminononanoate: step 2/2. Functionally, catalyzes the conversion of dethiobiotin (DTB) to biotin by the insertion of a sulfur atom into dethiobiotin via a radical-based mechanism. The sequence is that of Biotin synthase from Synechocystis sp. (strain ATCC 27184 / PCC 6803 / Kazusa).